We begin with the raw amino-acid sequence, 287 residues long: 4-diphosphocytidyl-2-C-methyl-D-erythritol kinase (287 aa).

Lys-12 is an active-site residue. 97-107 provides a ligand contact to ATP; the sequence is PMGGGLGGGSS. Residue Asp-139 is part of the active site.

The protein belongs to the GHMP kinase family. IspE subfamily.

It carries out the reaction 4-CDP-2-C-methyl-D-erythritol + ATP = 4-CDP-2-C-methyl-D-erythritol 2-phosphate + ADP + H(+). It functions in the pathway isoprenoid biosynthesis; isopentenyl diphosphate biosynthesis via DXP pathway; isopentenyl diphosphate from 1-deoxy-D-xylulose 5-phosphate: step 3/6. Catalyzes the phosphorylation of the position 2 hydroxy group of 4-diphosphocytidyl-2C-methyl-D-erythritol. This is 4-diphosphocytidyl-2-C-methyl-D-erythritol kinase from Marinobacter nauticus (strain ATCC 700491 / DSM 11845 / VT8) (Marinobacter aquaeolei).